The following is a 383-amino-acid chain: MPSGCRCLHLVCLLCILGAPVKPARGNDCSSLCDLAHGCCAPDGSCRCDPGWEGLHCERCVRMPGCQHGTCHQPWQCICHTGWAGKFCDKDEHICTTQSPCRNGGQCVYDGGGDYHCVCPPGFHGRDCERKAGPCEQAGSPCRNGGQCQDDQGFALNFTCRCLAGFMGARCEVNVDDCLMRPCANGATCLDGINRFSCLCPEGFTGRFCTINLDDCASRPCQRGARCRDRVHDFDCLCPSGYGGKTCELVLPVPGPAATADSPPGPTLAVLVPATGPIPHSAGAGLLRISVKEVVRRQEAGLGEPSLVAVVVFGAVTAALVLSTVLLTLRAWRRGFCPPGPCCYPAPHYAPARQDQECQVSMLPTGLPLPPDLPPEPGKTTAL.

A signal peptide spans 1–26; it reads MPSGCRCLHLVCLLCILGAPVKPARG. 4 EGF-like domains span residues 27–58, 62–89, 91–129, and 131–172; these read NDCSSLCDLAHGCCAPDGSCRCDPGWEGLHCE, RMPGCQHGTCHQPWQCICHTGWAGKFCD, DEHICTTQSPCRNGGQCVYDGGGDYHCVCPPGFHGRDCE, and KAGP…ARCE. Residues 27–306 lie on the Extracellular side of the membrane; that stretch reads NDCSSLCDLA…RQEAGLGEPS (280 aa). Intrachain disulfides connect C29-C40, C33-C46, C48-C57, C66-C71, C79-C88, C95-C107, C101-C117, C119-C128, C135-C148, C142-C160, C162-C171, C178-C189, C183-C198, C200-C209, C216-C227, C221-C236, and C238-C247. The N-linked (GlcNAc...) asparagine glycan is linked to N157. An EGF-like 5; calcium-binding domain is found at 174–210; sequence NVDDCLMRPCANGATCLDGINRFSCLCPEGFTGRFCT. The EGF-like 6; calcium-binding domain occupies 212 to 248; that stretch reads NLDDCASRPCQRGARCRDRVHDFDCLCPSGYGGKTCE. Residues 307-327 form a helical membrane-spanning segment; that stretch reads LVAVVVFGAVTAALVLSTVLL. The Cytoplasmic segment spans residues 328–383; the sequence is TLRAWRRGFCPPGPCCYPAPHYAPARQDQECQVSMLPTGLPLPPDLPPEPGKTTAL. Residues 364–383 form a disordered region; it reads PTGLPLPPDLPPEPGKTTAL. Pro residues predominate over residues 367 to 377; that stretch reads LPLPPDLPPEP.

It is found in the membrane. Its function is as follows. Regulates adipogenesis. This is Protein delta homolog 2 (DLK2) from Bos taurus (Bovine).